The chain runs to 92 residues: Large ribosomal subunit protein eL34 (92 aa).

This sequence belongs to the eukaryotic ribosomal protein eL34 family.

The chain is Large ribosomal subunit protein eL34 from Staphylothermus marinus (strain ATCC 43588 / DSM 3639 / JCM 9404 / F1).